The chain runs to 338 residues: Homocysteine S-methyltransferase 3 (338 aa).

One can recognise a Hcy-binding domain in the interval 12 to 326; that stretch reads AVRRWVDAAG…NTIRAIHRTL (315 aa). Residues Cys244, Cys311, and Cys312 each contribute to the Zn(2+) site.

In terms of assembly, monomer. It depends on Zn(2+) as a cofactor.

The catalysed reaction is S-methyl-L-methionine + L-homocysteine = 2 L-methionine + H(+). Catalyzes methyl transfer from S-methylmethionine (SMM) to adenosyl-L-homocysteine (AdoMet). SMM degradation (by HMT-1, HMT-2, HMT-3 and HMT-4) and biosynthesis (by MMT1) constitute the SMM cycle in plants, which is probably required to achieve short term control of AdoMet level. The sequence is that of Homocysteine S-methyltransferase 3 (HMT-3) from Zea mays (Maize).